We begin with the raw amino-acid sequence, 269 residues long: Embryonic polyadenylate-binding protein 2 (269 aa).

The disordered stretch occupies residues 26–54 (EAQGWGAWGRTEKTSLVPSAGSDKEAEEN). One can recognise an RRM domain in the interval 139 to 216 (RSVYVGNVDY…RVIKVLPKRT (78 aa)). Residues 240–269 (LQGSLQRKPRLRPHGQSRGRGRASPWFSPY) form a disordered region. A compositionally biased stretch (basic residues) spans 246–260 (RKPRLRPHGQSRGRG).

Its subcellular location is the cytoplasm. Binds the poly(A) tail of mRNA. In Rattus norvegicus (Rat), this protein is Embryonic polyadenylate-binding protein 2 (Pabpn1l).